The primary structure comprises 220 residues: Fibroblast growth factor 3 (220 aa).

Residues 1–19 (MLVIWLLLLALLPEPRVPA) form the signal peptide. Positions 19–40 (AATASPRAPRDAGGRGGVYEHL) are disordered. N-linked (GlcNAc...) asparagine glycosylation occurs at N66.

This sequence belongs to the heparin-binding growth factors family.

It is found in the secreted. Its function is as follows. Plays an important role in the regulation of embryonic development, cell proliferation, and cell differentiation. In Gallus gallus (Chicken), this protein is Fibroblast growth factor 3 (FGF3).